Consider the following 2134-residue polypeptide: Tudor domain-containing protein 6 (2134 aa).

Residues 287-315 form a disordered region; it reads RAPVGTDDEDSGSATWEEREESPDKPGSP. T292 carries the phosphothreonine modification. Tudor domains follow at residues 309–368, 542–599, 820–879, and 1038–1092; these read PDKP…YFRM, RPEP…FRQL, YEGD…FFQV, and TLAP…AHDV. Residues 1271-1296 form a disordered region; the sequence is SPMSGTKLDSALPERRMGEPSGRDLP. Over residues 1282 to 1296 the composition is skewed to basic and acidic residues; it reads LPERRMGEPSGRDLP. 2 Tudor domains span residues 1358-1417 and 1570-1630; these read QWQS…DAVL and CPQI…LLLV. Disordered stretches follow at residues 1699–1733 and 1860–1885; these read KKYAKTGVPKNDLSSEKRGPERKGSLASPDLGLKK and LQHSPAGEEEKEELGLGSPMAPLSPG. A compositionally biased stretch (basic and acidic residues) spans 1711–1722; the sequence is LSSEKRGPERKG. Phosphoserine occurs at positions 1723 and 1726. S1925 is modified (phosphoserine). Residues 1930 to 1939 are compositionally biased toward polar residues; sequence AVSQDIQGSR. Residues 1930–1985 are disordered; it reads AVSQDIQGSRCSEDERKAGYMGSSDDDHSRSPLLQHGKGGNSPAHDGRNLSEEEFP. A phosphoserine mark is found at S1980, S2063, and S2115.

Found in a mRNP complex (i.e. messenger ribonucleoproteins which correspond to mRNA with bound proteins), at least composed of TDRD1, TDRD6, TDRD7 and DDX4. Found in a complex, at least composed of PIWIL1, PIWIL2, DDX4 and TDRD6. Interacts with Tex19.1 and probably Tex19.2. Interacts with PRMT5. Interacts with SNRPB (when methylated); to trigger spliceosome formation. Post-translationally, undergoes proteolytic cleavage near the C-terminal by an unknown protease during the transition from meiosis I to meiosis II in primary spermatocytes. As to expression, testis specific. Expressed in primary spermatocytes at post natal (PN) day 17.5. Expressed in midpachytene stage of primary spermatocytes at PN16 and in round spermatids at PN22 (at protein level).

Its subcellular location is the cytoplasm. In terms of biological role, tudor domain-containing protein involved in germ cell development, more specifically the formation of chromatoid body (during spermiogenesis), Balbiani body (during oogenesis), germ plasm (upon fertilization), and for proper miRNA expression and spliceosome maturation. Essential for RNA-dependent helicase UPF1 localization to chromatoid body, for UPF1-UPF2 and UPF1-DDX4 interactions which are required for mRNA degradation, using the extended 3' UTR-triggered nonsense-mediated mRNA decay (NMD) pathway. Involved in spliceosome maturation and mRNA splicing in prophase I spermatocytes through interaction with arginine N-methyltransferase PRMT5 and symmetrically arginine dimethylated SNRPB (small nuclear ribonucleoprotein-associated protein). The chain is Tudor domain-containing protein 6 from Mus musculus (Mouse).